Consider the following 464-residue polypeptide: Antithrombin-III (464 aa).

The signal sequence occupies residues 1 to 32 (MYSNVIGTVTSGKRKVYLLSLLLIGFWDCVTC). Disulfide bonds link cysteine 40/cysteine 160 and cysteine 53/cysteine 127. At threonine 63 the chain carries Phosphothreonine; by FAM20C. Serine 68 carries the post-translational modification Phosphoserine; by FAM20C. Tryptophan 81 is a heparin binding site. Residue asparagine 128 is glycosylated (N-linked (GlcNAc...) asparagine). Arginine 161 serves as a coordination point for heparin. Asparagine 167 carries N-linked (GlcNAc...) asparagine glycosylation. Heparin is bound at residue arginine 177. A glycan (N-linked (GlcNAc...) (complex) asparagine) is linked at asparagine 187. Residue asparagine 224 is glycosylated (N-linked (GlcNAc...) asparagine). Cysteine 279 and cysteine 462 are joined by a disulfide.

Belongs to the serpin family. As to quaternary structure, forms protease inhibiting heterodimer with TMPRSS7. Post-translationally, phosphorylated by FAM20C in the extracellular medium. In terms of tissue distribution, found in plasma.

Its subcellular location is the secreted. The protein resides in the extracellular space. Functionally, most important serine protease inhibitor in plasma that regulates the blood coagulation cascade. AT-III inhibits thrombin, matriptase-3/TMPRSS7, as well as factors IXa, Xa and XIa. Its inhibitory activity is greatly enhanced in the presence of heparin. In Homo sapiens (Human), this protein is Antithrombin-III (SERPINC1).